Reading from the N-terminus, the 38-residue chain is Photosystem II reaction center protein L (38 aa).

A helical membrane pass occupies residues 17–37 (SLYWGLLLIFVLAVSFSNYFF).

The protein belongs to the PsbL family. In terms of assembly, PSII is composed of 1 copy each of membrane proteins PsbA, PsbB, PsbC, PsbD, PsbE, PsbF, PsbH, PsbI, PsbJ, PsbK, PsbL, PsbM, PsbT, PsbX, PsbY, PsbZ, Psb30/Ycf12, at least 3 peripheral proteins of the oxygen-evolving complex and a large number of cofactors. It forms dimeric complexes.

Its subcellular location is the plastid membrane. Its function is as follows. One of the components of the core complex of photosystem II (PSII). PSII is a light-driven water:plastoquinone oxidoreductase that uses light energy to abstract electrons from H(2)O, generating O(2) and a proton gradient subsequently used for ATP formation. It consists of a core antenna complex that captures photons, and an electron transfer chain that converts photonic excitation into a charge separation. This subunit is found at the monomer-monomer interface and is required for correct PSII assembly and/or dimerization. This is Photosystem II reaction center protein L from Aneura mirabilis (Parasitic liverwort).